We begin with the raw amino-acid sequence, 137 residues long: Large ribosomal subunit protein uL16 (137 aa).

The segment covering 1-17 has biased composition (basic residues); it reads MLQPKRTKFRKTHKGRN. The segment at 1 to 24 is disordered; the sequence is MLQPKRTKFRKTHKGRNRGLANSG.

It belongs to the universal ribosomal protein uL16 family. Part of the 50S ribosomal subunit.

In terms of biological role, binds 23S rRNA and is also seen to make contacts with the A and possibly P site tRNAs. This chain is Large ribosomal subunit protein uL16, found in Aeromonas hydrophila subsp. hydrophila (strain ATCC 7966 / DSM 30187 / BCRC 13018 / CCUG 14551 / JCM 1027 / KCTC 2358 / NCIMB 9240 / NCTC 8049).